We begin with the raw amino-acid sequence, 196 residues long: Peptidyl-tRNA hydrolase (196 aa).

Y19 lines the tRNA pocket. Catalysis depends on H24, which acts as the Proton acceptor. 3 residues coordinate tRNA: Y68, N70, and N116.

This sequence belongs to the PTH family. Monomer.

The protein resides in the cytoplasm. The enzyme catalyses an N-acyl-L-alpha-aminoacyl-tRNA + H2O = an N-acyl-L-amino acid + a tRNA + H(+). Hydrolyzes ribosome-free peptidyl-tRNAs (with 1 or more amino acids incorporated), which drop off the ribosome during protein synthesis, or as a result of ribosome stalling. Its function is as follows. Catalyzes the release of premature peptidyl moieties from peptidyl-tRNA molecules trapped in stalled 50S ribosomal subunits, and thus maintains levels of free tRNAs and 50S ribosomes. This is Peptidyl-tRNA hydrolase from Aromatoleum aromaticum (strain DSM 19018 / LMG 30748 / EbN1) (Azoarcus sp. (strain EbN1)).